The sequence spans 426 residues: L-cysteine:1D-myo-inositol 2-amino-2-deoxy-alpha-D-glucopyranoside ligase (426 aa).

Residue cysteine 45 participates in Zn(2+) binding. L-cysteinyl-5'-AMP is bound by residues 45–48 (CGIT), threonine 60, and 83–85 (NVT). Residues 47 to 57 (ITPYDATHIGH) carry the 'HIGH' region motif. The short motif at 199–204 (ERGGDP) is the 'ERGGDP' region element. Position 239 (tryptophan 239) interacts with L-cysteinyl-5'-AMP. Cysteine 243 contributes to the Zn(2+) binding site. 261 to 263 (GSD) contributes to the L-cysteinyl-5'-AMP binding site. Zn(2+) is bound at residue histidine 268. Valine 294 serves as a coordination point for L-cysteinyl-5'-AMP. Positions 300–304 (KMSKS) match the 'KMSKS' region motif.

The protein belongs to the class-I aminoacyl-tRNA synthetase family. MshC subfamily. As to quaternary structure, monomer. The cofactor is Zn(2+).

The enzyme catalyses 1D-myo-inositol 2-amino-2-deoxy-alpha-D-glucopyranoside + L-cysteine + ATP = 1D-myo-inositol 2-(L-cysteinylamino)-2-deoxy-alpha-D-glucopyranoside + AMP + diphosphate + H(+). Its function is as follows. Catalyzes the ATP-dependent condensation of GlcN-Ins and L-cysteine to form L-Cys-GlcN-Ins. The polypeptide is L-cysteine:1D-myo-inositol 2-amino-2-deoxy-alpha-D-glucopyranoside ligase (Clavibacter michiganensis subsp. michiganensis (strain NCPPB 382)).